The following is a 500-amino-acid chain: Metacaspase-5 (500 aa).

The first 18 residues, 1–18 (MDAALALLFGQVATAVLP), serve as a signal peptide directing secretion. An important for catalytic activity region spans residues 19–63 (YVVNSIGRVPRPKRVDVKKAMGEAHQCRPVVPYRAPRPYTEGRVK). N-linked (GlcNAc...) asparagine glycosylation is found at N70 and N113. Residue H147 is part of the active site. Residues D162, D178, and D179 each contribute to the Ca(2+) site. C202 is a catalytic residue. D209 is a binding site for Ca(2+). N-linked (GlcNAc...) asparagine glycosylation is found at N219, N235, N258, N264, N283, and N332. 2 disordered regions span residues 358–419 (EATL…QAYY) and 444–500 (QPPQ…PGRK). Residues 379-389 (ASTSNGKSNPG) are compositionally biased toward polar residues. Over residues 444 to 461 (QPPQQAYYQPPQQAYYQP) the composition is skewed to low complexity.

Belongs to the peptidase C14B family.

Its subcellular location is the recycling endosome. Cysteine protease that cleaves specifically after arginine or lysine residues. The sequence is that of Metacaspase-5 from Trypanosoma brucei brucei.